Here is a 322-residue protein sequence, read N- to C-terminus: MSFSAVTKNELARVVGSKKCCRMAELAALIKMDGSVQISGQKKFSLNIVTENAAVARKIFTLLKNLFGLSTEIMVRRKVRLRKNNVYIVRIPAQPGIEEIFKALGFQAGSFSFTEEGIVKDLIARDCCRKAYLRGAFLGGGSVNNPEGTYHLEIITDNQKHAQDLVELMQYFQLPAKVSPRKNWYVVYLKGSEQIIDCLNLMEAHSALLDFENARIYKGVRNQVNRLVNCETANLNKTVNAAVRQLENIKFLADRIGLEKLPKPLKETAEYRLQYPDASLKELGELWTPPVGKSGVNHRIRKIERLAEKLRSGKEYHGYKED.

Residues 279–312 (SLKELGELWTPPVGKSGVNHRIRKIERLAEKLRS) constitute a DNA-binding region (H-T-H motif).

It belongs to the WhiA family.

Involved in cell division and chromosome segregation. This is Probable cell division protein WhiA from Desulforamulus reducens (strain ATCC BAA-1160 / DSM 100696 / MI-1) (Desulfotomaculum reducens).